The sequence spans 87 residues: Cell division topological specificity factor (87 aa).

Belongs to the MinE family.

Its function is as follows. Prevents the cell division inhibition by proteins MinC and MinD at internal division sites while permitting inhibition at polar sites. This ensures cell division at the proper site by restricting the formation of a division septum at the midpoint of the long axis of the cell. This is Cell division topological specificity factor from Roseiflexus sp. (strain RS-1).